Consider the following 90-residue polypeptide: Acylphosphatase (90 aa).

The 88-residue stretch at Gln3–Tyr90 folds into the Acylphosphatase-like domain. Residues Arg18 and Asn36 contribute to the active site.

Belongs to the acylphosphatase family.

The catalysed reaction is an acyl phosphate + H2O = a carboxylate + phosphate + H(+). The polypeptide is Acylphosphatase (acyP) (Bacillus licheniformis (strain ATCC 14580 / DSM 13 / JCM 2505 / CCUG 7422 / NBRC 12200 / NCIMB 9375 / NCTC 10341 / NRRL NRS-1264 / Gibson 46)).